Here is a 260-residue protein sequence, read N- to C-terminus: Arginine esterase (260 aa).

Residues 1 to 17 form the signal peptide; it reads MWFLALCLAMSLGWTGA. Residues 18 to 24 constitute a propeptide, activation peptide; the sequence is EPHFQPR. Residues 25–257 form the Peptidase S1 domain; it reads IIGGRECLKN…HLMWIKDTMK (233 aa). Intrachain disulfides connect C31–C172, C50–C66, C151–C218, C183–C197, and C208–C233. H65 serves as the catalytic Charge relay system. N79 carries N-linked (GlcNAc...) asparagine glycosylation. D119 functions as the Charge relay system in the catalytic mechanism. The active-site Charge relay system is the S212.

It belongs to the peptidase S1 family. Kallikrein subfamily.

It catalyses the reaction Preferential cleavage of Arg-|-Xaa bonds in small molecule substrates. Highly selective action to release kallidin (lysyl-bradykinin) from kininogen involves hydrolysis of Met-|-Xaa or Leu-|-Xaa.. Its function is as follows. This serine protease is found in dog seminal plasma, its exact physiological function is not known. This is Arginine esterase from Canis lupus familiaris (Dog).